The sequence spans 282 residues: Large ribosomal subunit protein uL2 (282 aa).

2 disordered regions span residues 31 to 55 (KRLT…RHIG) and 223 to 282 (LAMN…NTQR). Composition is skewed to basic residues over residues 34-55 (TKPV…RHIG) and 270-282 (VTRR…NTQR).

Belongs to the universal ribosomal protein uL2 family. As to quaternary structure, part of the 50S ribosomal subunit. Forms a bridge to the 30S subunit in the 70S ribosome.

Its function is as follows. One of the primary rRNA binding proteins. Required for association of the 30S and 50S subunits to form the 70S ribosome, for tRNA binding and peptide bond formation. It has been suggested to have peptidyltransferase activity; this is somewhat controversial. Makes several contacts with the 16S rRNA in the 70S ribosome. In Anaeromyxobacter dehalogenans (strain 2CP-C), this protein is Large ribosomal subunit protein uL2.